The sequence spans 287 residues: Probable endoribonuclease YicC (287 aa).

The protein belongs to the YicC/YloC family. It depends on a divalent metal cation as a cofactor.

Probably a ssRNA endonuclease. Its function is as follows. Might contribute to small RNA (sRNA) regulation. This is Probable endoribonuclease YicC from Haemophilus influenzae (strain ATCC 51907 / DSM 11121 / KW20 / Rd).